The primary structure comprises 504 residues: Ribonuclease Y (504 aa).

The helical transmembrane segment at T2–I22 threads the bilayer. One can recognise a KH domain in the interval T194–V279. In terms of domain architecture, HD spans V320 to A413.

The protein belongs to the RNase Y family.

Its subcellular location is the cell membrane. Endoribonuclease that initiates mRNA decay. The protein is Ribonuclease Y of Treponema pallidum (strain Nichols).